Reading from the N-terminus, the 142-residue chain is Aspartate 1-decarboxylase (142 aa).

Ser25 (schiff-base intermediate with substrate; via pyruvic acid) is an active-site residue. Ser25 is modified (pyruvic acid (Ser)). Thr57 is a substrate binding site. Catalysis depends on Tyr58, which acts as the Proton donor. Residue 73–75 participates in substrate binding; it reads GAA.

It belongs to the PanD family. As to quaternary structure, heterooctamer of four alpha and four beta subunits. Pyruvate serves as cofactor. In terms of processing, is synthesized initially as an inactive proenzyme, which is activated by self-cleavage at a specific serine bond to produce a beta-subunit with a hydroxyl group at its C-terminus and an alpha-subunit with a pyruvoyl group at its N-terminus.

The protein localises to the cytoplasm. It catalyses the reaction L-aspartate + H(+) = beta-alanine + CO2. It functions in the pathway cofactor biosynthesis; (R)-pantothenate biosynthesis; beta-alanine from L-aspartate: step 1/1. Its function is as follows. Catalyzes the pyruvoyl-dependent decarboxylation of aspartate to produce beta-alanine. The chain is Aspartate 1-decarboxylase from Mycobacterium leprae (strain Br4923).